We begin with the raw amino-acid sequence, 202 residues long: Virulence protein F (202 aa).

The segment covering 1-15 (MRNSSLRDASGSNDA) has biased composition (polar residues). The segment at 1-21 (MRNSSLRDASGSNDAQVPHKT) is disordered. The 23-residue stretch at 20 to 42 (KTELLNLPDHVLTEVAKRLATNN) folds into the F-box domain.

Component of SCF(virF) E3 ubiquitin ligase complexes. Interacts with host VIP1 and SKP1A. Interacts with Arabidopsis thaliana ENAP1/VFP3 and VFP5 in the host cell nucleus.

The protein localises to the host nucleus. Functionally, in the host plant, component of SCF(virF) E3 ubiquitin ligase complexes, which mediate the ubiquitination and subsequent proteasomal degradation of target proteins such as the host VIP1, after its implication in T-DNA translocation to the host nucleus. Required for the formation of tumors of a wild-type size on certain plant species only. In Agrobacterium tumefaciens (strain 15955), this protein is Virulence protein F.